We begin with the raw amino-acid sequence, 119 residues long: Protein phosphatase EYA4 (119 aa).

This sequence belongs to the HAD-like hydrolase superfamily. EYA family. Mg(2+) is required as a cofactor.

It localises to the cytoplasm. Its subcellular location is the nucleus. The enzyme catalyses O-phospho-L-tyrosyl-[protein] + H2O = L-tyrosyl-[protein] + phosphate. Its function is as follows. Tyrosine phosphatase that specifically dephosphorylates 'Tyr-142' of histone H2AX (H2AXY142ph). 'Tyr-142' phosphorylation of histone H2AX plays a central role in DNA repair and acts as a mark that distinguishes between apoptotic and repair responses to genotoxic stress. Promotes efficient DNA repair by dephosphorylating H2AX, promoting the recruitment of DNA repair complexes containing MDC1. Its function as histone phosphatase probably explains its role in transcription regulation during organogenesis. May be involved in development of the eye. The chain is Protein phosphatase EYA4 (eya4) from Takifugu rubripes (Japanese pufferfish).